Reading from the N-terminus, the 425-residue chain is Enolase (425 aa).

Gln-165 contributes to the (2R)-2-phosphoglycerate binding site. Glu-207 (proton donor) is an active-site residue. Residues Asp-244, Glu-285, and Asp-312 each contribute to the Mg(2+) site. (2R)-2-phosphoglycerate is bound by residues Lys-337, Arg-366, Ser-367, and Lys-388. Catalysis depends on Lys-337, which acts as the Proton acceptor.

The protein belongs to the enolase family. Mg(2+) serves as cofactor.

It is found in the cytoplasm. Its subcellular location is the secreted. The protein localises to the cell surface. It carries out the reaction (2R)-2-phosphoglycerate = phosphoenolpyruvate + H2O. It participates in carbohydrate degradation; glycolysis; pyruvate from D-glyceraldehyde 3-phosphate: step 4/5. Its function is as follows. Catalyzes the reversible conversion of 2-phosphoglycerate (2-PG) into phosphoenolpyruvate (PEP). It is essential for the degradation of carbohydrates via glycolysis. The chain is Enolase from Wolbachia sp. subsp. Brugia malayi (strain TRS).